A 379-amino-acid chain; its full sequence is Cytochrome b (379 aa).

Transmembrane regions (helical) follow at residues 33-53 (FGSL…FLAM), 77-98 (WLIR…YLHI), 113-133 (WNIG…GYVL), and 178-198 (FFAF…LHLL). Residues His83 and His97 each coordinate heme b. Residues His182 and His196 each contribute to the heme b site. Residue His201 participates in a ubiquinone binding. 4 helical membrane passes run 226–246 (YKDL…ALFY), 288–308 (LGGV…PILH), 320–340 (ASQL…WIGG), and 347–367 (YIII…VLNP).

It belongs to the cytochrome b family. The cytochrome bc1 complex contains 3 respiratory subunits (MT-CYB, CYC1 and UQCRFS1), 2 core proteins (UQCRC1 and UQCRC2) and probably 6 low-molecular weight proteins. It depends on heme b as a cofactor.

The protein localises to the mitochondrion inner membrane. Functionally, component of the ubiquinol-cytochrome c reductase complex (complex III or cytochrome b-c1 complex) that is part of the mitochondrial respiratory chain. The b-c1 complex mediates electron transfer from ubiquinol to cytochrome c. Contributes to the generation of a proton gradient across the mitochondrial membrane that is then used for ATP synthesis. In Anguilla rostrata (American eel), this protein is Cytochrome b (mt-cyb).